Reading from the N-terminus, the 209-residue chain is MIAIIDYGMGNIRSIEQALTSIGVEHLVTDRQREIVKSDGVILPGVGAFPKAMEALEAKKLVTVLQECGKTGKPLLGICLGMQLLFEKSEEMKSSNGLGLLPGVVRKLQVPYKIPHMGWNRLTKTKEMPIWNRVADGSFVYYVHSYYAECPNDMICGTSEYGISVPGLVAKGNIFGAQFHPEKSGEIGIQMLANFKGVVKQWKSSQLSI.

A Glutamine amidotransferase type-1 domain is found at 1 to 205; the sequence is MIAIIDYGMG…KGVVKQWKSS (205 aa). Residue C79 is the Nucleophile of the active site. Catalysis depends on residues H180 and E182.

Heterodimer of HisH and HisF.

The protein localises to the cytoplasm. The enzyme catalyses 5-[(5-phospho-1-deoxy-D-ribulos-1-ylimino)methylamino]-1-(5-phospho-beta-D-ribosyl)imidazole-4-carboxamide + L-glutamine = D-erythro-1-(imidazol-4-yl)glycerol 3-phosphate + 5-amino-1-(5-phospho-beta-D-ribosyl)imidazole-4-carboxamide + L-glutamate + H(+). The catalysed reaction is L-glutamine + H2O = L-glutamate + NH4(+). It functions in the pathway amino-acid biosynthesis; L-histidine biosynthesis; L-histidine from 5-phospho-alpha-D-ribose 1-diphosphate: step 5/9. Functionally, IGPS catalyzes the conversion of PRFAR and glutamine to IGP, AICAR and glutamate. The HisH subunit catalyzes the hydrolysis of glutamine to glutamate and ammonia as part of the synthesis of IGP and AICAR. The resulting ammonia molecule is channeled to the active site of HisF. This is Imidazole glycerol phosphate synthase subunit HisH from Bacillus cytotoxicus (strain DSM 22905 / CIP 110041 / 391-98 / NVH 391-98).